A 712-amino-acid chain; its full sequence is Ribosomal RNA large subunit methyltransferase K/L (712 aa).

The THUMP domain occupies 42–153; the sequence is QALRIVMWSR…KGRASLSIDL (112 aa).

This sequence belongs to the methyltransferase superfamily. RlmKL family.

It is found in the cytoplasm. It carries out the reaction guanosine(2445) in 23S rRNA + S-adenosyl-L-methionine = N(2)-methylguanosine(2445) in 23S rRNA + S-adenosyl-L-homocysteine + H(+). The catalysed reaction is guanosine(2069) in 23S rRNA + S-adenosyl-L-methionine = N(2)-methylguanosine(2069) in 23S rRNA + S-adenosyl-L-homocysteine + H(+). Its function is as follows. Specifically methylates the guanine in position 2445 (m2G2445) and the guanine in position 2069 (m7G2069) of 23S rRNA. This is Ribosomal RNA large subunit methyltransferase K/L from Stenotrophomonas maltophilia (strain K279a).